A 461-amino-acid polypeptide reads, in one-letter code: Photosystem II CP43 reaction center protein (461 aa).

Positions 1–2 (ME) are excised as a propeptide. Position 3 is an N-acetylthreonine (threonine 3). A Phosphothreonine modification is found at threonine 3. A run of 5 helical transmembrane segments spans residues 57–81 (LFEV…PHLA), 122–143 (LIGP…KDKN), 166–188 (KALY…RIIT), 243–263 (QPWA…LSYS), and 279–300 (WFNN…ASQS). Glutamate 355 contributes to the [CaMn4O5] cluster binding site. A helical transmembrane segment spans residues 435–459 (RARAAAAGFEKGIDRFNEPTLSLRP).

Belongs to the PsbB/PsbC family. PsbC subfamily. PSII is composed of 1 copy each of membrane proteins PsbA, PsbB, PsbC, PsbD, PsbE, PsbF, PsbH, PsbI, PsbJ, PsbK, PsbL, PsbM, PsbT, PsbX, PsbY, PsbZ, Psb30/Ycf12, at least 3 peripheral proteins of the oxygen-evolving complex and a large number of cofactors. It forms dimeric complexes. Binds multiple chlorophylls and provides some of the ligands for the Ca-4Mn-5O cluster of the oxygen-evolving complex. It may also provide a ligand for a Cl- that is required for oxygen evolution. PSII binds additional chlorophylls, carotenoids and specific lipids. is required as a cofactor.

It localises to the plastid. The protein localises to the chloroplast thylakoid membrane. In terms of biological role, one of the components of the core complex of photosystem II (PSII). It binds chlorophyll and helps catalyze the primary light-induced photochemical processes of PSII. PSII is a light-driven water:plastoquinone oxidoreductase, using light energy to abstract electrons from H(2)O, generating O(2) and a proton gradient subsequently used for ATP formation. This is Photosystem II CP43 reaction center protein from Oedogonium cardiacum (Filamentous green alga).